A 269-amino-acid chain; its full sequence is Expansin-B9 (269 aa).

Positions 1-24 (MGSLTTNIVLAVAVVAALVGGGSC) are cleaved as a signal peptide. N-linked (GlcNAc...) asparagine glycosylation occurs at Asn-34. The Expansin-like EG45 domain maps to 63-169 (GGACGIKNVN…RRVRCKYPGG (107 aa)). 3 disulfide bridges follow: Cys-66–Cys-94, Cys-97–Cys-164, and Cys-102–Cys-108. The 82-residue stretch at 183 to 264 (NYLAVLVKFV…NWMPDAIYVS (82 aa)) folds into the Expansin-like CBD domain.

This sequence belongs to the expansin family. Expansin B subfamily.

It localises to the secreted. Its subcellular location is the cell wall. The protein resides in the membrane. Its function is as follows. May cause loosening and extension of plant cell walls by disrupting non-covalent bonding between cellulose microfibrils and matrix glucans. No enzymatic activity has been found. May be required for rapid internodal elongation in deepwater rice during submergence. The chain is Expansin-B9 (EXPB9) from Oryza sativa subsp. japonica (Rice).